Here is a 142-residue protein sequence, read N- to C-terminus: Hemoglobin subunit alpha-A (142 aa).

The Globin domain maps to 2–142 (VLSANDKTNV…VGNVLTAKYR (141 aa)). H59 lines the O2 pocket. H88 provides a ligand contact to heme b.

This sequence belongs to the globin family. In terms of assembly, heterotetramer of two alpha chains and two beta chains. As to expression, red blood cells.

In terms of biological role, involved in oxygen transport from the lung to the various peripheral tissues. The chain is Hemoglobin subunit alpha-A (HBAA) from Aegypius monachus (Cinereous vulture).